Reading from the N-terminus, the 655-residue chain is uncharacterized protein (655 aa).

A helical transmembrane segment spans residues 5 to 25 (IIIIIFIVINFINIIISSITF). Disordered regions lie at residues 337 to 363 (NSDY…NNNN) and 484 to 525 (DKIG…SDNS). Positions 515–524 (DNNSIGSSDN) are enriched in low complexity. Residues 588 to 608 (ILAVTISAIGIICVALLLTVV) traverse the membrane as a helical segment.

Its subcellular location is the membrane. This is an uncharacterized protein from Dictyostelium discoideum (Social amoeba).